The primary structure comprises 184 residues: Nutrient stress-induced DNA-binding protein (184 aa).

It belongs to the Dps family. As to quaternary structure, hexamer.

Its function is as follows. Involved in protection of chromosomal DNA from damage under nutrient-limited and oxidative stress conditions. Binds heme. This is Nutrient stress-induced DNA-binding protein (dpsA) from Nostoc sp. (strain PCC 7120 / SAG 25.82 / UTEX 2576).